The following is a 635-amino-acid chain: Dihydrolipoyllysine-residue acetyltransferase component of pyruvate dehydrogenase complex, mitochondrial (635 aa).

The 78-residue stretch at 83 to 160 (GKEITMPALS…EINKPIAIIV (78 aa)) folds into the Lipoyl-binding 1 domain. Lys-124 bears the N6-lipoyllysine mark. Positions 171–204 (KNYKPSSQASSTPVQEEAPKPKQEAPKKSTKTYP) are disordered. Polar residues predominate over residues 174–184 (KPSSQASSTPV). Residues 187-197 (EAPKPKQEAPK) are compositionally biased toward basic and acidic residues. The Lipoyl-binding 2 domain occupies 206–283 (HKVVGMPALS…QINQPVCIIV (78 aa)). Lys-247 is subject to N6-lipoyllysine. Residues 295 to 338 (YSVEEQSSSSSSSSQESTPSSSSSSSQESTPSQSSSQQTTRKSG) are disordered. Low complexity predominate over residues 298–334 (EEQSSSSSSSSQESTPSSSSSSSQESTPSQSSSQQTT). Residues 342 to 379 (FATPAARFEASSKGYDLSAINGTGPNNRILKADVLEFV) enclose the Peripheral subunit-binding (PSBD) domain. A disordered region spans residues 382–413 (KQEVAQQQQQQTTTTTKKPTTPTSSGEFTDIP). Residues 387–404 (QQQQQQTTTTTKKPTTPT) are compositionally biased toward low complexity. Positions 403–635 (PTSSGEFTDI…YVENPIKLIL (233 aa)) are catalytic.

Belongs to the 2-oxoacid dehydrogenase family. 20 to 30 alpha(2)-beta(2) tetramers of E1 + 6 homodimers of E3 + 60 copies of E2. Requires (R)-lipoate as cofactor.

It is found in the mitochondrion matrix. The catalysed reaction is N(6)-[(R)-dihydrolipoyl]-L-lysyl-[protein] + acetyl-CoA = N(6)-[(R)-S(8)-acetyldihydrolipoyl]-L-lysyl-[protein] + CoA. Functionally, the pyruvate dehydrogenase complex catalyzes the overall conversion of pyruvate to acetyl-CoA and CO(2). It contains multiple copies of three enzymatic components: pyruvate dehydrogenase (E1), dihydrolipoamide acetyltransferase (E2) and lipoamide dehydrogenase (E3). The protein is Dihydrolipoyllysine-residue acetyltransferase component of pyruvate dehydrogenase complex, mitochondrial (pdhC) of Dictyostelium discoideum (Social amoeba).